We begin with the raw amino-acid sequence, 564 residues long: DNA ligase B (564 aa).

The active-site N6-AMP-lysine intermediate is the K130.

The protein belongs to the NAD-dependent DNA ligase family. LigB subfamily.

The enzyme catalyses NAD(+) + (deoxyribonucleotide)n-3'-hydroxyl + 5'-phospho-(deoxyribonucleotide)m = (deoxyribonucleotide)n+m + AMP + beta-nicotinamide D-nucleotide.. Its function is as follows. Catalyzes the formation of phosphodiester linkages between 5'-phosphoryl and 3'-hydroxyl groups in double-stranded DNA using NAD as a coenzyme and as the energy source for the reaction. This is DNA ligase B from Klebsiella pneumoniae subsp. pneumoniae (strain ATCC 700721 / MGH 78578).